The primary structure comprises 261 residues: Shikimate dehydrogenase (NADP(+)) (261 aa).

Shikimate contacts are provided by residues 13–15 (SLS) and threonine 60. The active-site Proton acceptor is lysine 64. Residue glutamate 76 participates in NADP(+) binding. 2 residues coordinate shikimate: asparagine 85 and aspartate 100. NADP(+)-binding positions include 122–126 (GAGGA), 143–148 (NRTVER), and isoleucine 203. Tyrosine 205 contacts shikimate. Residue glycine 226 participates in NADP(+) binding.

Belongs to the shikimate dehydrogenase family. As to quaternary structure, homodimer.

It carries out the reaction shikimate + NADP(+) = 3-dehydroshikimate + NADPH + H(+). It participates in metabolic intermediate biosynthesis; chorismate biosynthesis; chorismate from D-erythrose 4-phosphate and phosphoenolpyruvate: step 4/7. In terms of biological role, involved in the biosynthesis of the chorismate, which leads to the biosynthesis of aromatic amino acids. Catalyzes the reversible NADPH linked reduction of 3-dehydroshikimate (DHSA) to yield shikimate (SA). This Exiguobacterium sp. (strain ATCC BAA-1283 / AT1b) protein is Shikimate dehydrogenase (NADP(+)).